The chain runs to 487 residues: Glutamyl-tRNA(Gln) amidotransferase subunit A (487 aa).

Active-site charge relay system residues include Lys77 and Ser152. Residue Ser176 is the Acyl-ester intermediate of the active site.

This sequence belongs to the amidase family. GatA subfamily. Heterotrimer of A, B and C subunits.

It carries out the reaction L-glutamyl-tRNA(Gln) + L-glutamine + ATP + H2O = L-glutaminyl-tRNA(Gln) + L-glutamate + ADP + phosphate + H(+). In terms of biological role, allows the formation of correctly charged Gln-tRNA(Gln) through the transamidation of misacylated Glu-tRNA(Gln) in organisms which lack glutaminyl-tRNA synthetase. The reaction takes place in the presence of glutamine and ATP through an activated gamma-phospho-Glu-tRNA(Gln). This Ligilactobacillus salivarius (strain UCC118) (Lactobacillus salivarius) protein is Glutamyl-tRNA(Gln) amidotransferase subunit A.